The primary structure comprises 244 residues: Eukaryotic translation initiation factor 4E type 1B (244 aa).

Over residues 1 to 26 (MNKVEGGGHKEEVVVKEKEVVKEKPS) the composition is skewed to basic and acidic residues. A disordered region spans residues 1-57 (MNKVEGGGHKEEVVVKEKEVVKEKPSEATAEGVQAGEAKDLPGSLKTQRRKAHREHP). Positions 65-68 (HPLQ) are EIF4EBP1/2/3 binding. 84–85 (WQ) provides a ligand contact to mRNA. An EIF4EBP1/2/3 binding region spans residues 101 to 105 (WAVYS). MRNA is bound at residue 130-131 (WE). An EIF4EBP1/2/3 binding region spans residues 160–167 (ETLLCLVG). MRNA-binding positions include 185–190 (RTKRDK) and 233–235 (AKS).

This sequence belongs to the eukaryotic initiation factor 4E family. EIF4F is a multi-subunit complex, the composition of which varies with external and internal environmental conditions. It is composed of at least EIF4A, EIF4E and EIF4G.

Recognizes and binds the 7-methylguanosine-containing mRNA cap during an early step in the initiation of protein synthesis and facilitates ribosome binding by inducing the unwinding of the mRNAs secondary structures. The sequence is that of Eukaryotic translation initiation factor 4E type 1B (Eif4e1b) from Mus musculus (Mouse).